The primary structure comprises 473 residues: Aspartyl aminopeptidase 1 (473 aa).

Residue histidine 93 participates in Zn(2+) binding. Substrate is bound at residue histidine 168. Zn(2+) contacts are provided by aspartate 262, glutamate 298, glutamate 299, and aspartate 343. Glutamate 298 contributes to the substrate binding site. Substrate contacts are provided by aspartate 343, histidine 346, lysine 371, and tyrosine 378. Zn(2+) is bound at residue histidine 437.

The protein belongs to the peptidase M18 family. As to quaternary structure, tetrahedron-shaped homododecamer built from six homodimers. Interacts with autophagy receptor Nbr1. Requires Zn(2+) as cofactor.

The protein resides in the cytoplasm. The protein localises to the vacuole lumen. It catalyses the reaction Release of an N-terminal aspartate or glutamate from a peptide, with a preference for aspartate.. Functionally, aspartyl aminopeptidase that is able to remove aspartyl residue at N-terminus of angiotensin I. Also acts as a chaperone and efficiently suppressed the thermal aggregation of citrate synthase. This is Aspartyl aminopeptidase 1 (ape4) from Schizosaccharomyces pombe (strain 972 / ATCC 24843) (Fission yeast).